A 707-amino-acid chain; its full sequence is Polyribonucleotide nucleotidyltransferase (707 aa).

Mg(2+)-binding residues include Asp488 and Asp494. One can recognise a KH domain in the interval 555 to 614 (PRLYVMKINPEKIRDVIGKGGAVIRALTEETGTQINIEEDGTITIASNDSAKADEAKRRI). The S1 motif domain occupies 624 to 692 (GKVYEGAITK…EKGRVKLSMK (69 aa)).

The protein belongs to the polyribonucleotide nucleotidyltransferase family. Requires Mg(2+) as cofactor.

It is found in the cytoplasm. The catalysed reaction is RNA(n+1) + phosphate = RNA(n) + a ribonucleoside 5'-diphosphate. Involved in mRNA degradation. Catalyzes the phosphorolysis of single-stranded polyribonucleotides processively in the 3'- to 5'-direction. The protein is Polyribonucleotide nucleotidyltransferase of Polaromonas sp. (strain JS666 / ATCC BAA-500).